The chain runs to 119 residues: Chorion class CA protein ERA.5 (119 aa).

The signal sequence occupies residues 1 to 21 (MSTYTFVLFCLQICLIQNVYS). The segment at 22 to 55 (QCLGRVGPGGPPVGPYGGPLGGPGYGPVGYGGCG) is left arm. The segment at 56–103 (GYGGSGIGNVAVAGELPVAGSSAVMGQVPVIGAVEFAGPACAVGSVSI) is central domain. Residues 104–119 (SGACGPTCGCGGSPYY) are right arm.

Belongs to the chorion protein family.

In terms of biological role, this protein is one of many from the eggshell of the silk moth. This Bombyx mori (Silk moth) protein is Chorion class CA protein ERA.5 (ERA.5).